The primary structure comprises 564 residues: Periplasmic [NiFe] hydrogenase large subunit (564 aa).

Ni(2+) is bound by residues Cys72, Cys75, Cys543, and Cys546. The propeptide occupies 550–564 (VIEPETNEILKFKVC).

Belongs to the [NiFe]/[NiFeSe] hydrogenase large subunit family. Heterodimer of a large and a small subunit. It depends on Ni(2+) as a cofactor.

The protein localises to the periplasm. The catalysed reaction is 2 Fe(III)-[cytochrome c3] + H2 = 2 Fe(II)-[cytochrome c3] + 2 H(+). This Solidesulfovibrio fructosivorans (Desulfovibrio fructosivorans) protein is Periplasmic [NiFe] hydrogenase large subunit (hydB).